We begin with the raw amino-acid sequence, 155 residues long: Small ribosomal subunit protein eS19B (155 aa).

This sequence belongs to the eukaryotic ribosomal protein eS19 family.

The chain is Small ribosomal subunit protein eS19B (RpS19b) from Drosophila melanogaster (Fruit fly).